The primary structure comprises 89 residues: Co-chaperonin GroES (89 aa).

It belongs to the GroES chaperonin family. Heptamer of 7 subunits arranged in a ring. Interacts with the chaperonin GroEL.

It localises to the cytoplasm. Functionally, together with the chaperonin GroEL, plays an essential role in assisting protein folding. The GroEL-GroES system forms a nano-cage that allows encapsulation of the non-native substrate proteins and provides a physical environment optimized to promote and accelerate protein folding. GroES binds to the apical surface of the GroEL ring, thereby capping the opening of the GroEL channel. The chain is Co-chaperonin GroES from Petrotoga mobilis (strain DSM 10674 / SJ95).